The chain runs to 335 residues: Ornithine carbamoyltransferase (335 aa).

Residues serine 60–threonine 63, glutamine 87, arginine 111, and histidine 138–glutamine 141 contribute to the carbamoyl phosphate site. L-ornithine-binding positions include asparagine 171, aspartate 235, and serine 239–methionine 240. Carbamoyl phosphate is bound by residues cysteine 277–leucine 278 and arginine 322.

This sequence belongs to the aspartate/ornithine carbamoyltransferase superfamily. OTCase family.

The protein localises to the cytoplasm. It catalyses the reaction carbamoyl phosphate + L-ornithine = L-citrulline + phosphate + H(+). It functions in the pathway amino-acid biosynthesis; L-arginine biosynthesis; L-arginine from L-ornithine and carbamoyl phosphate: step 1/3. In terms of biological role, reversibly catalyzes the transfer of the carbamoyl group from carbamoyl phosphate (CP) to the N(epsilon) atom of ornithine (ORN) to produce L-citrulline. The sequence is that of Ornithine carbamoyltransferase from Streptomyces avermitilis (strain ATCC 31267 / DSM 46492 / JCM 5070 / NBRC 14893 / NCIMB 12804 / NRRL 8165 / MA-4680).